A 350-amino-acid chain; its full sequence is Heat-inducible transcription repressor HrcA (350 aa).

It belongs to the HrcA family.

Its function is as follows. Negative regulator of class I heat shock genes (grpE-dnaK-dnaJ and groELS operons). Prevents heat-shock induction of these operons. This Limosilactobacillus reuteri (strain DSM 20016) (Lactobacillus reuteri) protein is Heat-inducible transcription repressor HrcA.